Here is a 379-residue protein sequence, read N- to C-terminus: Sialidase-2 (379 aa).

Positions 20–23 match the FRIP motif motif; the sequence is YRIP. R21 and R41 together coordinate substrate. D46 functions as the Proton acceptor in the catalytic mechanism. The BNR 1 repeat unit spans residues 127 to 138; sequence ITSTDHGKTWSA. The substrate site is built by Y179 and Y181. The BNR 2 repeat unit spans residues 197–208; it reads FLSHDHGSTWEL. Substrate is bound by residues E218, R237, and R303. Residue Y333 is the Nucleophile of the active site. The active site involves E354.

Belongs to the glycosyl hydrolase 33 family.

The protein resides in the cytoplasm. It catalyses the reaction Hydrolysis of alpha-(2-&gt;3)-, alpha-(2-&gt;6)-, alpha-(2-&gt;8)- glycosidic linkages of terminal sialic acid residues in oligosaccharides, glycoproteins, glycolipids, colominic acid and synthetic substrates.. In terms of biological role, catalyzes the removal of sialic acid (N-acetylneuraminic acid) moieties from glycoproteins, oligosaccharides and gangliosides. In Cricetulus griseus (Chinese hamster), this protein is Sialidase-2 (NEU2).